The chain runs to 159 residues: Globin CTT-W (159 aa).

The first 16 residues, 1–16 (MKFLVILTLCIAGAIA), serve as a signal peptide directing secretion. The 143-residue stretch at 17 to 159 (HCDKAPFIKA…HHAIVYSILE (143 aa)) folds into the Globin domain. Residues histidine 73 and histidine 108 each coordinate heme b.

Belongs to the globin family.

The chain is Globin CTT-W (CTT-W) from Chironomus thummi piger (Midge).